We begin with the raw amino-acid sequence, 98 residues long: DNA-binding protein Fis (98 aa).

A DNA-binding region (H-T-H motif) is located at residues 74–93; the sequence is QTRAALMMGINRGTLRKKLK.

This sequence belongs to the transcriptional regulatory Fis family. As to quaternary structure, homodimer.

Its function is as follows. Activates ribosomal RNA transcription. Plays a direct role in upstream activation of rRNA promoters. This chain is DNA-binding protein Fis, found in Pectobacterium atrosepticum (strain SCRI 1043 / ATCC BAA-672) (Erwinia carotovora subsp. atroseptica).